The sequence spans 93 residues: Red pigment-concentrating hormone (93 aa).

Positions 1-21 (MVRAVVATLLVVLVVASCVSA) are cleaved as a signal peptide. Glutamine 22 carries the post-translational modification Pyrrolidone carboxylic acid. Tryptophan 29 is subject to Tryptophan amide. Residues 33–93 (AAAGGEGTGM…VQCQDEEYLG (61 aa)) constitute a propeptide that is removed on maturation. A disordered region spans residues 34 to 56 (AAGGEGTGMHPPAGAVVPPPSSL).

The protein belongs to the AKH/HRTH/RPCH family. Strongly expressed in the eyestalk and weakly in brain. Not expressed in other tissues tested.

It localises to the secreted. Functionally, this hormone adapts the animal to light backgrounds by stimulating concentration of the pigment of its red body-chromatophores. This chain is Red pigment-concentrating hormone, found in Penaeus monodon (Giant tiger prawn).